A 295-amino-acid chain; its full sequence is G1/S-specific cyclin-D1 (295 aa).

Residues 28–152 (LRAMLKAEET…LLVNKLKWNL (125 aa)) form the Cyclin N-terminal domain. Positions 262–295 (AQQNMDPKAAEEEEEEEEEVDLACTPTDVRDVDI) are disordered. Lys-269 participates in a covalent cross-link: Glycyl lysine isopeptide (Lys-Gly) (interchain with G-Cter in ubiquitin). Residues 272 to 282 (EEEEEEEEEVD) show a composition bias toward acidic residues. Position 286 is a phosphothreonine (Thr-286).

This sequence belongs to the cyclin family. Cyclin D subfamily. As to quaternary structure, interacts with either CDK4 or CDK6 protein kinase to form a serine/threonine kinase holoenzyme complex. The cyclin subunit imparts substrate specificity to the complex. Component of the ternary complex CCND1/CDK4/CDKN1B required for nuclear translocation and modulation of CDK4-mediated kinase activity. Interacts directly with CDKN1B. Can form similar complexes with either CDKN1A or CDKN2A. Interacts with UHRF2; the interaction ubiquitinates CCND1 and appears to occur independently of phosphorylation. Interacts with USP2. Interacts (via cyclin N-terminal domain) with INSM1 (via N-terminal region); the interaction competes with the binding of CCND1 to CDK4 during cell cycle progression and inhibits CDK4 activity. Interacts with CDK4; the interaction is prevented with the binding of CCND1 to INSM1 during cell cycle progression. Phosphorylation at Thr-286 by MAP kinases is required for ubiquitination and degradation by the DCX(AMBRA1) complex. It also plays an essential role for recognition by the FBXO31 component of SCF (SKP1-cullin-F-box) protein ligase complex following DNA damage. In terms of processing, ubiquitinated at Lys-269 by the DCX(AMBRA1) complex during the transition from G1 to S cell phase, leading to its degradation: ubiquitination is dependent on Thr-286 phosphorylation. The DCX(AMBRA1) complex represents the major regulator of CCND1 stability during the G1/S transition. Also ubiquitinated by the SCF(FBXO4) and Cul7-RING(FBXW8) ubiquitin-protein ligase complexes. Following DNA damage it is ubiquitinated by the SCF(FBXO31) protein ligase complex. SCF(FBXO31) ubiquitination is dependent on Thr-286 phosphorylation. Ubiquitinated also by UHRF2 apparently in a phosphorylation-independent manner. Ubiquitination leads to its degradation and G1 arrest. Deubiquitinated by USP2; leading to its stabilization.

The protein resides in the nucleus. Its subcellular location is the cytoplasm. It is found in the nucleus membrane. Regulatory component of the cyclin D1-CDK4 (DC) complex that phosphorylates and inhibits members of the retinoblastoma (RB) protein family including RB1 and regulates the cell-cycle during G(1)/S transition. Phosphorylation of RB1 allows dissociation of the transcription factor E2F from the RB/E2F complex and the subsequent transcription of E2F target genes which are responsible for the progression through the G(1) phase. Hypophosphorylates RB1 in early G(1) phase. Cyclin D-CDK4 complexes are major integrators of various mitogenenic and antimitogenic signals. Also a substrate for SMAD3, phosphorylating SMAD3 in a cell-cycle-dependent manner and repressing its transcriptional activity. Component of the ternary complex, cyclin D1/CDK4/CDKN1B, required for nuclear translocation and activity of the cyclin D-CDK4 complex. Exhibits transcriptional corepressor activity with INSM1 on the NEUROD1 and INS promoters in a cell cycle-independent manner. This is G1/S-specific cyclin-D1 (CCND1) from Pongo abelii (Sumatran orangutan).